Reading from the N-terminus, the 232-residue chain is Phosphatidylserine decarboxylase proenzyme (232 aa).

Ser-190 acts as the Schiff-base intermediate with substrate; via pyruvic acid in catalysis. Residue Ser-190 is modified to Pyruvic acid (Ser); by autocatalysis.

Belongs to the phosphatidylserine decarboxylase family. PSD-A subfamily. In terms of assembly, heterodimer of a large membrane-associated beta subunit and a small pyruvoyl-containing alpha subunit. Pyruvate is required as a cofactor. Post-translationally, is synthesized initially as an inactive proenzyme. Formation of the active enzyme involves a self-maturation process in which the active site pyruvoyl group is generated from an internal serine residue via an autocatalytic post-translational modification. Two non-identical subunits are generated from the proenzyme in this reaction, and the pyruvate is formed at the N-terminus of the alpha chain, which is derived from the carboxyl end of the proenzyme. The post-translation cleavage follows an unusual pathway, termed non-hydrolytic serinolysis, in which the side chain hydroxyl group of the serine supplies its oxygen atom to form the C-terminus of the beta chain, while the remainder of the serine residue undergoes an oxidative deamination to produce ammonia and the pyruvoyl prosthetic group on the alpha chain.

The protein localises to the cell membrane. The catalysed reaction is a 1,2-diacyl-sn-glycero-3-phospho-L-serine + H(+) = a 1,2-diacyl-sn-glycero-3-phosphoethanolamine + CO2. The protein operates within phospholipid metabolism; phosphatidylethanolamine biosynthesis; phosphatidylethanolamine from CDP-diacylglycerol: step 2/2. Its function is as follows. Catalyzes the formation of phosphatidylethanolamine (PtdEtn) from phosphatidylserine (PtdSer). The chain is Phosphatidylserine decarboxylase proenzyme from Methylocella silvestris (strain DSM 15510 / CIP 108128 / LMG 27833 / NCIMB 13906 / BL2).